Consider the following 383-residue polypeptide: MKNICLLGATGSIGEQTLDVIKAHDDKFRLTAMTFGKNAEKAAEIIETFKPKYVGVGDEHTYETLKQHSFSYTFKTGIGEEALIEAAVIPEADIVVNALVGSVGLLPTLKAMEHKKTIALANKETLVTAGHIVKEHAQKYDVPLLPVDSEHSAIFQALQGENPKHIKRLIVTASGGSFRDRTRRELEGVTVEEALNHPNWSMGAKITIDSATMMNKGLEVIEAHWLFDLPYDQIDVLLHKESIIHSMVEFHDRSVIAQLGTPDMRVPIQYALSHPERLPFNEAKSLDLWEVGQLNFAQADFERFRCLQFAYESGKIGGTMPTVLNAANEEAVAAFLSGRISFLGIEDIIEKALERHQVIAKPSLQEIREVDKDARKFVQTLLT.

The NADPH site is built by Thr-10, Gly-11, Ser-12, Ile-13, Gly-36, Lys-37, Asn-38, and Asn-122. Lys-123 contributes to the 1-deoxy-D-xylulose 5-phosphate binding site. NADPH is bound at residue Glu-124. Asp-148 provides a ligand contact to Mn(2+). Residues Ser-149, Glu-150, Ser-174, and His-197 each contribute to the 1-deoxy-D-xylulose 5-phosphate site. Position 150 (Glu-150) interacts with Mn(2+). Gly-203 is a binding site for NADPH. Ser-210, Asn-215, Lys-216, and Glu-219 together coordinate 1-deoxy-D-xylulose 5-phosphate. Glu-219 is a Mn(2+) binding site.

Belongs to the DXR family. Mg(2+) serves as cofactor. Mn(2+) is required as a cofactor.

The enzyme catalyses 2-C-methyl-D-erythritol 4-phosphate + NADP(+) = 1-deoxy-D-xylulose 5-phosphate + NADPH + H(+). Its pathway is isoprenoid biosynthesis; isopentenyl diphosphate biosynthesis via DXP pathway; isopentenyl diphosphate from 1-deoxy-D-xylulose 5-phosphate: step 1/6. In terms of biological role, catalyzes the NADPH-dependent rearrangement and reduction of 1-deoxy-D-xylulose-5-phosphate (DXP) to 2-C-methyl-D-erythritol 4-phosphate (MEP). The chain is 1-deoxy-D-xylulose 5-phosphate reductoisomerase from Bacillus licheniformis (strain ATCC 14580 / DSM 13 / JCM 2505 / CCUG 7422 / NBRC 12200 / NCIMB 9375 / NCTC 10341 / NRRL NRS-1264 / Gibson 46).